Consider the following 145-residue polypeptide: Small ribosomal subunit protein bS16 (145 aa).

The tract at residues 82 to 145 (IKERAATNNP…EAAAEEQTEA (64 aa)) is disordered. Positions 95 to 115 (EPGKKAKERAEERAEKAREAA) are enriched in basic and acidic residues. Residues 116 to 137 (EAAAAAAAAPAEEAAAEAPAEA) show a composition bias toward low complexity.

This sequence belongs to the bacterial ribosomal protein bS16 family.

This chain is Small ribosomal subunit protein bS16, found in Novosphingobium aromaticivorans (strain ATCC 700278 / DSM 12444 / CCUG 56034 / CIP 105152 / NBRC 16084 / F199).